A 210-amino-acid polypeptide reads, in one-letter code: Regulator of G-protein signaling 17 (210 aa).

Residues 1 to 21 (MRKRQQSQNEGTQAVSQAPGN) form a disordered region. In terms of domain architecture, RGS spans 84-200 (NFDKMMKTPA…LNSQIYKAFV (117 aa)). Residue Tyr137 is modified to Phosphotyrosine.

Interacts with GNAI1 and GNAQ. Interacts with GNAZ and GNAI2. Interacts with OPRM1. Forms a complex with mu-opioid receptors and G(alpha)z/i2 subunits, including GNAZ and GNAI2; the formation of this complex results in mu-opioid receptor desensitization. Interacts with HINT1. Post-translationally, N- and O-glycosylated in synapsomal membranes. In terms of processing, serine phosphorylated in synapsomal membranes. Sumoylated with SUMO1 and SUM02 in synaptosomes. The sumoylated forms act as a scaffold for sequestering mu-opioid receptor-activated G(alpha) subunits. Desumoylated by HINT1. In terms of tissue distribution, detected in brain (at protein level). Highly expressed in the hypothalamus, periaqueductal gray matter, and pons-medulla. Lower levels in the thalamus, cortex and spinal cord. Weak expression in the striatum and cerebellum.

It localises to the membrane. Its subcellular location is the synapse. The protein resides in the synaptosome. It is found in the nucleus. The protein localises to the cytoplasm. Functionally, regulates G protein-coupled receptor signaling cascades, including signaling via muscarinic acetylcholine receptor CHRM2 and dopamine receptor DRD2. Inhibits signal transduction by increasing the GTPase activity of G protein alpha subunits, thereby driving them into their inactive GDP-bound form. Binds selectively to GNAZ and GNAI2 subunits, accelerates their GTPase activity and regulates their signaling activities. Negatively regulates mu-opioid receptor-mediated activation of the G-proteins. This Mus musculus (Mouse) protein is Regulator of G-protein signaling 17 (Rgs17).